The sequence spans 691 residues: MARVVPIDMQRNIGIMAHIDAGKTTTTERILFYTGVSHKIGEVHDGAATMDWMEQEQERGITITSAATTCFWREHRVNIIDTPGHVDFTIEVERSLRVLDGAVCVFDAVAGVEPQSETVWRQADRYGVPRICFVNKMDRIGASFERCVGMIRDRLRAKPIPVQLPIGAEDRFEGVIDLITGKAVTFDKASKGQTFNVGDVPAEYRDQYDAMRFEMIEAVAEEDEALMEKYLGGEELTVEEIISCVRKATIARNIVPVLCGSAFRNMGVQPLLDAVVDFLPSPVDIEQMKGVNPDKEEETIVCPCDDKEPLAALVFKLFSDPYIGHLSFCRIYSGFIESGMTVLNANTGKRERVGRLLKMHANKREEIKWAGAGDIVALVGLKLASTGDTICDEKRPVVLESLDIPEPVIEVAIEPKTKADRDALSAALAKLAKEDPSFRVKGDDETNQTLIAGMGELHLEIIVDRLTREFSVNANVGKPQVAYRETITKPGKADTKHVKQSGGRGQYGHAVIEIEPNPGKGYEFVNSITGGVIPKEYIAPIDKGIQDALKSGILSGFPTVDIKVNLVFGSYHDVDSSEQAFYVTGSMAIKEAIAKSGPVLLEPIMDVEVVTPDEYLGDVMGDLNGRRGKVQSMEARVGAQSIRAQVPLSEMFGYATDLRSKTQGRATFSMQFHHYERVPAALAEELVKKKG.

Residues 8–283 (DMQRNIGIMA…AVVDFLPSPV (276 aa)) enclose the tr-type G domain. GTP-binding positions include 17–24 (AHIDAGKT), 81–85 (DTPGH), and 135–138 (NKMD).

Belongs to the TRAFAC class translation factor GTPase superfamily. Classic translation factor GTPase family. EF-G/EF-2 subfamily.

The protein resides in the cytoplasm. In terms of biological role, catalyzes the GTP-dependent ribosomal translocation step during translation elongation. During this step, the ribosome changes from the pre-translocational (PRE) to the post-translocational (POST) state as the newly formed A-site-bound peptidyl-tRNA and P-site-bound deacylated tRNA move to the P and E sites, respectively. Catalyzes the coordinated movement of the two tRNA molecules, the mRNA and conformational changes in the ribosome. This is Elongation factor G from Nitratidesulfovibrio vulgaris (strain ATCC 29579 / DSM 644 / CCUG 34227 / NCIMB 8303 / VKM B-1760 / Hildenborough) (Desulfovibrio vulgaris).